A 329-amino-acid chain; its full sequence is Putative GTPase Obg (329 aa).

The Obg domain maps to 1 to 159; the sequence is MQFIDQARIM…WPLQLELKLL (159 aa). Positions 160-328 constitute an OBG-type G domain; the sequence is AEVGIIGLPN…LKTQIWQQLG (169 aa). Residues 166–173, 191–195, 213–216, 280–283, and 309–311 each bind GTP; these read GLPNAGKS, FTTLI, DIPG, SKIE, and SSA. Mg(2+)-binding residues include Ser173 and Thr193.

It belongs to the TRAFAC class OBG-HflX-like GTPase superfamily. OBG GTPase family. Monomer. Requires Mg(2+) as cofactor.

The protein localises to the plastid. Its subcellular location is the organellar chromatophore. Functionally, an essential GTPase which binds GTP, GDP and possibly (p)ppGpp with moderate affinity, with high nucleotide exchange rates and a fairly low GTP hydrolysis rate. The polypeptide is Putative GTPase Obg (Paulinella chromatophora).